We begin with the raw amino-acid sequence, 71 residues long: UPF0346 protein SPT_1257 (71 aa).

Belongs to the UPF0346 family.

In Streptococcus pneumoniae (strain Taiwan19F-14), this protein is UPF0346 protein SPT_1257.